The chain runs to 809 residues: Zinc finger CCCH domain-containing protein 24 (809 aa).

At Met1 the chain carries N-acetylmethionine. The tract at residues Met1 to Thr74 is disordered. Polar residues predominate over residues Glu30 to Asp46. Residues Val51–Asn65 are compositionally biased toward basic and acidic residues. Residues Trp79–Ala107 form a C3H1-type zinc finger. Residues Gln536 and Glu586 each coordinate S-adenosyl-L-methionine. Residues Glu652–Lys693 form a disordered region. A compositionally biased stretch (basic and acidic residues) spans Asn678–Thr692. Asp704 serves as a coordination point for S-adenosyl-L-methionine. Catalysis depends on Cys732, which acts as the Nucleophile.

It belongs to the class I-like SAM-binding methyltransferase superfamily. RNA M5U methyltransferase family.

The sequence is that of Zinc finger CCCH domain-containing protein 24 from Arabidopsis thaliana (Mouse-ear cress).